The sequence spans 169 residues: 3-hydroxyanthranilate 3,4-dioxygenase (169 aa).

Arg44 contributes to the O2 binding site. Fe cation is bound by residues His48, Glu54, and His92. Residue Glu54 participates in substrate binding. The substrate site is built by Arg96 and Glu106. Residues Cys121, Cys124, Cys158, and Cys160 each coordinate a divalent metal cation.

The protein belongs to the 3-HAO family. The cofactor is Fe(2+).

It is found in the cytoplasm. It carries out the reaction 3-hydroxyanthranilate + O2 = (2Z,4Z)-2-amino-3-carboxymuconate 6-semialdehyde. It participates in cofactor biosynthesis; NAD(+) biosynthesis; quinolinate from L-kynurenine: step 3/3. Functionally, catalyzes the oxidative ring opening of 3-hydroxyanthranilate to 2-amino-3-carboxymuconate semialdehyde, which spontaneously cyclizes to quinolinate. This is 3-hydroxyanthranilate 3,4-dioxygenase from Meyerozyma guilliermondii (strain ATCC 6260 / CBS 566 / DSM 6381 / JCM 1539 / NBRC 10279 / NRRL Y-324) (Yeast).